Consider the following 365-residue polypeptide: Alanine racemase (365 aa).

Lys32 acts as the Proton acceptor; specific for D-alanine in catalysis. An N6-(pyridoxal phosphate)lysine modification is found at Lys32. Arg128 provides a ligand contact to substrate. The Proton acceptor; specific for L-alanine role is filled by Tyr257. Met305 serves as a coordination point for substrate.

Belongs to the alanine racemase family. Pyridoxal 5'-phosphate serves as cofactor.

It carries out the reaction L-alanine = D-alanine. Its pathway is amino-acid biosynthesis; D-alanine biosynthesis; D-alanine from L-alanine: step 1/1. In terms of biological role, catalyzes the interconversion of L-alanine and D-alanine. May also act on other amino acids. This is Alanine racemase (alr) from Francisella tularensis subsp. tularensis (strain WY96-3418).